The sequence spans 314 residues: Palmitoyl-protein thioesterase 1 (314 aa).

A signal peptide spans 1 to 25 (MISICCSRFSCILFLLFLIFSLVLS). Cystine bridges form between cysteine 53–cysteine 54, cysteine 104–cysteine 136, and cysteine 160–cysteine 168. The Nucleophile role is filled by serine 123. N-linked (GlcNAc...) asparagine glycosylation is present at asparagine 240. Active-site residues include aspartate 241 and histidine 295.

The protein belongs to the palmitoyl-protein thioesterase family. In terms of tissue distribution, ubiquitously expressed.

It is found in the lysosome. The catalysed reaction is S-hexadecanoyl-L-cysteinyl-[protein] + H2O = L-cysteinyl-[protein] + hexadecanoate + H(+). Functionally, cleaves thioester-linked long fatty acyl groups such as palmitate from modified cysteine residues in proteins or peptides. The sequence is that of Palmitoyl-protein thioesterase 1 (Ppt1) from Drosophila melanogaster (Fruit fly).